The chain runs to 681 residues: DNA ligase (681 aa).

NAD(+) is bound by residues 42-46 (DAEYD), 91-92 (SL), and glutamate 120. Residue lysine 122 is the N6-AMP-lysine intermediate of the active site. The NAD(+) site is built by arginine 143, glutamate 180, lysine 302, and lysine 326. Zn(2+)-binding residues include cysteine 420, cysteine 423, cysteine 438, and cysteine 444. Residues 603-681 (ADAQPLLGQT…EAGLIELIGL (79 aa)) form the BRCT domain.

Belongs to the NAD-dependent DNA ligase family. LigA subfamily. Mg(2+) serves as cofactor. The cofactor is Mn(2+).

It carries out the reaction NAD(+) + (deoxyribonucleotide)n-3'-hydroxyl + 5'-phospho-(deoxyribonucleotide)m = (deoxyribonucleotide)n+m + AMP + beta-nicotinamide D-nucleotide.. Its function is as follows. DNA ligase that catalyzes the formation of phosphodiester linkages between 5'-phosphoryl and 3'-hydroxyl groups in double-stranded DNA using NAD as a coenzyme and as the energy source for the reaction. It is essential for DNA replication and repair of damaged DNA. This chain is DNA ligase, found in Shewanella amazonensis (strain ATCC BAA-1098 / SB2B).